A 336-amino-acid chain; its full sequence is uncharacterized protein (336 aa).

The interval 162–195 (ARGLPVHSSFKQNNSSQTSSNKGTTTVAAGSGSD) is disordered. Positions 169-187 (SSFKQNNSSQTSSNKGTTT) are enriched in low complexity.

It belongs to the AHA1 family.

This is an uncharacterized protein from Schizosaccharomyces pombe (strain 972 / ATCC 24843) (Fission yeast).